We begin with the raw amino-acid sequence, 217 residues long: Small ribosomal subunit protein uS3 (217 aa).

The KH type-2 domain maps to 38 to 106 (IRKFIDNELK…KVHINVIEIK (69 aa)).

The protein belongs to the universal ribosomal protein uS3 family. Part of the 30S ribosomal subunit. Forms a tight complex with proteins S10 and S14.

Binds the lower part of the 30S subunit head. Binds mRNA in the 70S ribosome, positioning it for translation. The protein is Small ribosomal subunit protein uS3 of Staphylococcus aureus (strain MSSA476).